The primary structure comprises 125 residues: Diol dehydratase-reactivating factor small subunit (125 aa).

E31 contributes to the Mg(2+) binding site.

It belongs to the DdrB/PduH family. As to quaternary structure, component of the DDR complex, a heterotetramer of DdrA(2)/DdrB(2). The DDR complex interacts with the diol dehydratase complex in the presence of ADP but not ATP. Mg(2+) is required as a cofactor.

The enzyme catalyses ATP + H2O = ADP + phosphate + H(+). In terms of biological role, small subunit of the diol dehydratase-reactivating factor (DDR), which reactivates suicidally inhibited adenosylcobalamin-dependent diol dehydratase (DD, pddA, pddB, pddC). DDR acts as a chaperone, reactivates inactivated DD holoenzyme in the presence of ATP, Mg(2+) and free adenosylcobalamin (AdoCbl), by mediating the exchange of the tightly bound damaged cofactor AdoCbl for a free intact one. Reactivation takes place in two steps: ADP-dependent cobalamin release, and ATP-dependent dissociation of the DD apoenzyme-DDR complex. DDR has weak ATPase activity which is required for DD reactivation. Activates glycerol-inactivated, O2-inactivated holoenzyme and inactivated enzyme-cyanocobalamin complex. Also reactivates glycerol-inactivated hologlycerol dehydratase, a DD isozyme. The protein is Diol dehydratase-reactivating factor small subunit of Klebsiella michiganensis (strain ATCC 8724 / DSM 4798 / JCM 20051 / NBRC 3318 / NRRL B-199 / KCTC 1686 / BUCSAV 143 / CCM 1901).